A 434-amino-acid polypeptide reads, in one-letter code: Eukaryotic peptide chain release factor subunit 1-1 (434 aa).

This sequence belongs to the eukaryotic release factor 1 family. Heterodimer of two subunits, one of which binds GTP.

It localises to the cytoplasm. Its function is as follows. Directs the termination of nascent peptide synthesis (translation) in response to the termination codons UAA, UAG and UGA. Modulates plant growth and development. In Brassica oleracea var. botrytis (Cauliflower), this protein is Eukaryotic peptide chain release factor subunit 1-1.